The chain runs to 144 residues: Large ribosomal subunit protein uL15 (144 aa).

A disordered region spans residues 1-57; it reads MRLNTLSPAPGSKPSAKRVGRGIGSGLGKTCGRGHKGQKSRSGGSVRPGFEGGQMPL. The span at 21–31 shows a compositional bias: gly residues; it reads RGIGSGLGKTC.

Belongs to the universal ribosomal protein uL15 family. As to quaternary structure, part of the 50S ribosomal subunit.

Binds to the 23S rRNA. The polypeptide is Large ribosomal subunit protein uL15 (Photobacterium profundum (strain SS9)).